The chain runs to 307 residues: Major pollen allergen Lol p 5a (307 aa).

Residues 1–25 (MAVQKYTVALFLAVALVAGPAASYA) form the signal peptide.

The protein belongs to the Poa p IX/Phl p VI allergen family. As to expression, pollen, starch granules.

This chain is Major pollen allergen Lol p 5a (LOLPIB), found in Lolium perenne (Perennial ryegrass).